The sequence spans 499 residues: Thioredoxin reductase 1, cytoplasmic (499 aa).

FAD-binding positions include 22-23 (SG), 42-43 (DF), 58-59 (TC), and 63-67 (GCIPK). Cys59 and Cys64 are oxidised to a cystine. Residue Lys68 is modified to N6-succinyllysine. Position 131 is a phosphotyrosine (Tyr131). FAD is bound by residues 131 to 132 (YG) and Thr161. NADP(+) contacts are provided by residues Arg166, 198 to 204 (ASYVALE), 221 to 222 (RS), Arg226, 226 to 228 (RGF), 292 to 293 (GR), and Lys315. Tyr200 lines the FAD pocket. FAD is bound by residues Asp334, 341 to 343 (ELT), and His472. Residue Glu341 coordinates NADP(+). His472 serves as the catalytic Proton acceptor. Positions 497–498 (CU) form a cross-link, cysteinyl-selenocysteine (Cys-Sec). Sec498 is a non-standard amino acid (selenocysteine).

It belongs to the class-I pyridine nucleotide-disulfide oxidoreductase family. In terms of assembly, homodimer. Requires FAD as cofactor. ISGylated.

It is found in the cytoplasm. The enzyme catalyses [thioredoxin]-dithiol + NADP(+) = [thioredoxin]-disulfide + NADPH + H(+). It carries out the reaction H2O2 + NADPH + H(+) = NADP(+) + 2 H2O. Its function is as follows. Reduces disulfideprotein thioredoxin (Trx) to its dithiol-containing form. Homodimeric flavoprotein involved in the regulation of cellular redox reactions, growth and differentiation. Contains a selenocysteine residue at the C-terminal active site that is essential for catalysis. Also has reductase activity on hydrogen peroxide (H2O2). The chain is Thioredoxin reductase 1, cytoplasmic (TXNRD1) from Bos taurus (Bovine).